The following is a 125-amino-acid chain: Diol dehydratase-reactivating factor small subunit (125 aa).

Position 31 (Glu-31) interacts with Mg(2+).

The protein belongs to the DdrB/PduH family. Component of the DDR complex, a heterotetramer of DdrA(2)/DdrB(2). The DDR complex interacts with the diol dehydratase complex in the presence of ADP but not ATP. Requires Mg(2+) as cofactor.

It carries out the reaction ATP + H2O = ADP + phosphate + H(+). In terms of biological role, small subunit of the diol dehydratase-reactivating factor (DDR), which reactivates suicidally inhibited adenosylcobalamin-dependent diol dehydratase (DD, pddA, pddB, pddC). DDR acts as a chaperone, reactivates inactivated DD holoenzyme in the presence of ATP, Mg(2+) and free adenosylcobalamin (AdoCbl), by mediating the exchange of the tightly bound damaged cofactor AdoCbl for a free intact one. Reactivation takes place in two steps: ADP-dependent cobalamin release, and ATP-dependent dissociation of the DD apoenzyme-DDR complex. DDR has weak ATPase activity which is required for DD reactivation. Activates glycerol-inactivated, O2-inactivated holoenzyme and inactivated enzyme-cyanocobalamin complex. Also reactivates glycerol-inactivated hologlycerol dehydratase, a DD isozyme. This Klebsiella michiganensis (strain ATCC 8724 / DSM 4798 / JCM 20051 / NBRC 3318 / NRRL B-199 / KCTC 1686 / BUCSAV 143 / CCM 1901) protein is Diol dehydratase-reactivating factor small subunit.